Reading from the N-terminus, the 153-residue chain is Pheromone-binding protein Gp-9 (153 aa).

The N-terminal stretch at 1 to 19 (MKTFVLHIFIFAFVAFASA) is a signal peptide. 3 disulfides stabilise this stretch: Cys37–Cys77, Cys73–Cys129, and Cys118–Cys138.

It belongs to the PBP/GOBP family. Homodimer.

It is found in the secreted. In terms of biological role, colony queen number, a major feature of social organization, is associated with worker genotype for Gp-9. Colonies are headed by either a single reproductive queen (monogyne form) or multiple queens (polygyne form). Differences in worker Gp-9 genotypes between social forms may cause differences in workers' abilities to recognize queens and regulate their numbers. This chain is Pheromone-binding protein Gp-9, found in Solenopsis geminata (Tropical fire ant).